The chain runs to 365 residues: Elongation factor Tu (365 aa).

Residues 1 to 7, 62 to 66, and 117 to 120 contribute to the GTP site; these read HVDHGKT, DCPGH, and NKCD. The tr-type G domain maps to 1–185; sequence HVDHGKTTLT…ILDTYIPEPK (185 aa). Residue Thr7 participates in Mg(2+) binding.

It belongs to the TRAFAC class translation factor GTPase superfamily. Classic translation factor GTPase family. EF-Tu/EF-1A subfamily. Monomer.

Its subcellular location is the cytoplasm. It catalyses the reaction GTP + H2O = GDP + phosphate + H(+). In terms of biological role, GTP hydrolase that promotes the GTP-dependent binding of aminoacyl-tRNA to the A-site of ribosomes during protein biosynthesis. The protein is Elongation factor Tu of Buchnera aphidicola subsp. Melaphis rhois.